A 195-amino-acid chain; its full sequence is Apoptosis-associated speck-like protein containing a CARD (195 aa).

The Pyrin domain maps to 1-91 (MGRARDAILD…AGQLQAATHQ (91 aa)). Residues Lys-55 and Lys-174 each participate in a glycyl lysine isopeptide (Lys-Gly) (interchain with G-Cter in ubiquitin) cross-link. Residues 107–195 (AAKPGLHFID…SYLVEDLERS (89 aa)) form the CARD domain. Residue Ser-195 is modified to Phosphoserine.

Self-associates; enforced oligomerization induces apoptosis, NF-kappa-B regulation and interleukin-1 beta secretion. Homooligomers can form disk-like particles of approximately 12 nm diameter and approximately 1 nm height. Next to isoform 1, also isoform 2 and isoform 3 may be involved in oligomerization leading to functional regulation. Component of several inflammasomes containing one pattern recognition receptor/sensor, such as NLRP1, NLRP2, NLRP3, NLRP6, NLRC4, AIM2, MEFV or NOD2, and probably NLRC4, NLRP12 or IFI16. Major component of the ASC pyroptosome, a 1-2 um supramolecular assembly (one per macrophage cell) which consists of oligomerized PYCARD dimers and CASP1. Interacts with CASP1 (precursor form); the interaction induces activation of CASP1 leading to the processing of interleukin-1 beta; PYCARD competes with RIPK2 for binding to CASP1. Interacts with NLRP3; the interaction requires the homooligomerization of NLRP3. Interacts with NLRP2, NLRC4, MEFV, CARD16, AIM2, IFI16, NOD2, RIGI, RIPK2, PYDC1, PYDC2, NLRP10, CASP8, CHUK, IKBKB and BAX. Component of the AIM2 PANoptosome complex, a multiprotein complex that drives inflammatory cell death (PANoptosis). Phosphorylated. Post-translationally, 'Lys-63'-linked polyubiquitination by TRAF3 is critical for speck formation and inflammasome activation. 'Lys-63'-linked deubiquitinated by USP50; a crucial step for NLRP3-mediated inflammasome activation. 'Lys-63'-linked polyubiquitination by PELI1 is also critical for speck formation and inflammasome activation. Deubiquitinated by USP3 that cleaves 'Lys-48'-linked ubiquitin chains and strengthens its stability by blocking proteasomal degradation. As to expression, widely expressed at low levels. Detected in peripheral blood leukocytes, lung, small intestine, spleen, thymus, colon and at lower levels in placenta, liver and kidney. Very low expression in skeletal muscle, heart and brain. Expressed in lung epithelial cells (at protein level). Detected in the leukemia cell lines HL-60 and U-937, but not in Jurkat T-cell lymphoma and Daudi Burkitt's lymphoma. Detected in the melanoma cell line WM35, but not in WM793. Not detected in HeLa cervical carcinoma cells and MOLT-4 lymphocytic leukemia cells.

The protein resides in the cytoplasm. It localises to the inflammasome. The protein localises to the endoplasmic reticulum. Its subcellular location is the mitochondrion. It is found in the nucleus. The protein resides in the golgi apparatus membrane. Functions as a key mediator in apoptosis and inflammation. Promotes caspase-mediated apoptosis involving predominantly caspase-8 and also caspase-9 in a probable cell type-specific manner. Involved in activation of the mitochondrial apoptotic pathway, promotes caspase-8-dependent proteolytic maturation of BID independently of FADD in certain cell types and also mediates mitochondrial translocation of BAX and activates BAX-dependent apoptosis coupled to activation of caspase-9, -2 and -3. Involved in innate immune response by acting as an integral adapter in the assembly of various inflammasomes (NLRP1, NLRP2, NLRP3, NLRP6, AIM2 and probably IFI16) which recruit and activate caspase-1 leading to processing and secretion of pro-inflammatory cytokines. Caspase-1-dependent inflammation leads to macrophage pyroptosis, a form of cell death. The function as activating adapter in different types of inflammasomes is mediated by the pyrin and CARD domains and their homotypic interactions. Clustered PYCARD nucleates the formation of caspase-1 filaments through the interaction of their respective CARD domains, acting as a platform for of caspase-1 polymerization. In the NLRP1 and NLRC4 inflammasomes seems not be required but facilitates the processing of procaspase-1. In cooperation with NOD2 involved in an inflammasome activated by bacterial muramyl dipeptide leading to caspase-1 activation. May be involved in RIGI-triggered pro-inflammatory responses and inflammasome activation. In collaboration with AIM2 which detects cytosolic double-stranded DNA may also be involved in a caspase-1-independent cell death that involves caspase-8. In adaptive immunity may be involved in maturation of dendritic cells to stimulate T-cell immunity and in cytoskeletal rearrangements coupled to chemotaxis and antigen uptake may be involved in post-transcriptional regulation of the guanine nucleotide exchange factor DOCK2; the latter function is proposed to involve the nuclear form. Also involved in transcriptional activation of cytokines and chemokines independent of the inflammasome; this function may involve AP-1, NF-kappa-B, MAPK and caspase-8 signaling pathways. For regulation of NF-kappa-B activating and inhibiting functions have been reported. Modulates NF-kappa-B induction at the level of the IKK complex by inhibiting kinase activity of CHUK and IKBK. Proposed to compete with RIPK2 for association with CASP1 thereby down-regulating CASP1-mediated RIPK2-dependent NF-kappa-B activation and activating interleukin-1 beta processing. Modulates host resistance to DNA virus infection, probably by inducing the cleavage of and inactivating CGAS in presence of cytoplasmic double-stranded DNA. Functionally, may have a regulating effect on the function as inflammasome adapter. In terms of biological role, seems to inhibit inflammasome-mediated maturation of interleukin-1 beta. The sequence is that of Apoptosis-associated speck-like protein containing a CARD from Homo sapiens (Human).